A 249-amino-acid chain; its full sequence is Chymase (249 aa).

Residues 1 to 19 (MHCLPLTLLLLLLCSRAEA) form the signal peptide. A propeptide spans 20-21 (EE) (activation peptide). Residues 22-245 (IIGGTESKPH…YRPWINKVLK (224 aa)) form the Peptidase S1 domain. A disulfide bond links Cys51 and Cys67. Residues His66 and Asp110 each act as charge relay system in the active site. Cystine bridges form between Cys144–Cys209 and Cys175–Cys188. Ser203 functions as the Charge relay system in the catalytic mechanism.

It belongs to the peptidase S1 family. Granzyme subfamily.

It is found in the secreted. The protein localises to the cytoplasmic granule. It catalyses the reaction Preferential cleavage: Phe-|-Xaa &gt; Tyr-|-Xaa &gt; Trp-|-Xaa &gt; Leu-|-Xaa.. Major secreted protease of mast cells with suspected roles in vasoactive peptide generation, extracellular matrix degradation, and regulation of gland secretion. The sequence is that of Chymase (CMA1) from Canis lupus familiaris (Dog).